Here is a 365-residue protein sequence, read N- to C-terminus: Chorismate synthase (365 aa).

NADP(+) contacts are provided by R48 and R54. FMN contacts are provided by residues 131–133, 243–244, G288, 303–307, and R329; these read RSS, NA, and KPTSS.

Belongs to the chorismate synthase family. Homotetramer. FMNH2 is required as a cofactor.

The enzyme catalyses 5-O-(1-carboxyvinyl)-3-phosphoshikimate = chorismate + phosphate. It functions in the pathway metabolic intermediate biosynthesis; chorismate biosynthesis; chorismate from D-erythrose 4-phosphate and phosphoenolpyruvate: step 7/7. Its function is as follows. Catalyzes the anti-1,4-elimination of the C-3 phosphate and the C-6 proR hydrogen from 5-enolpyruvylshikimate-3-phosphate (EPSP) to yield chorismate, which is the branch point compound that serves as the starting substrate for the three terminal pathways of aromatic amino acid biosynthesis. This reaction introduces a second double bond into the aromatic ring system. This Sinorhizobium fredii (strain NBRC 101917 / NGR234) protein is Chorismate synthase.